A 767-amino-acid polypeptide reads, in one-letter code: Photosystem I P700 chlorophyll a apoprotein A1 (767 aa).

8 consecutive transmembrane segments (helical) span residues 72-95 (IFSA…FHGA), 158-181 (LMAL…FHYH), 197-221 (LNHH…HVSL), 305-323 (IAHH…GHMY), 364-387 (WHAQ…QHMY), 403-429 (IGLF…IAMV), 451-473 (AIIS…LYIH), and 548-566 (FMVH…LILL). 2 residues coordinate [4Fe-4S] cluster: cysteine 590 and cysteine 599. The next 2 helical transmembrane spans lie at 606-627 (HVFL…HFSW) and 681-703 (TSAY…MFLF). Histidine 692 is a chlorophyll a' binding site. Chlorophyll a-binding residues include methionine 700 and tyrosine 708. Tryptophan 709 is a binding site for phylloquinone. Residues 741-761 (AVGVAHYLLGGIATTWAFFHA) form a helical membrane-spanning segment.

Belongs to the PsaA/PsaB family. In terms of assembly, the PsaA/B heterodimer binds the P700 chlorophyll special pair and subsequent electron acceptors. PSI consists of a core antenna complex that captures photons, and an electron transfer chain that converts photonic excitation into a charge separation. The cyanobacterial PSI reaction center is composed of one copy each of PsaA,B,C,D,E,F,I,J,K,L,M and X, and forms trimeric complexes. PSI electron transfer chain: 5 chlorophyll a, 1 chlorophyll a', 2 phylloquinones and 3 4Fe-4S clusters. PSI core antenna: 90 chlorophyll a, 22 carotenoids, 3 phospholipids and 1 galactolipid. P700 is a chlorophyll a/chlorophyll a' dimer, A0 is one or more chlorophyll a, A1 is one or both phylloquinones and FX is a shared 4Fe-4S iron-sulfur center. is required as a cofactor.

The protein localises to the cellular thylakoid membrane. It carries out the reaction reduced [plastocyanin] + hnu + oxidized [2Fe-2S]-[ferredoxin] = oxidized [plastocyanin] + reduced [2Fe-2S]-[ferredoxin]. In terms of biological role, psaA and PsaB bind P700, the primary electron donor of photosystem I (PSI), as well as the electron acceptors A0, A1 and FX. PSI is a plastocyanin/cytochrome c6-ferredoxin oxidoreductase, converting photonic excitation into a charge separation, which transfers an electron from the donor P700 chlorophyll pair to the spectroscopically characterized acceptors A0, A1, FX, FA and FB in turn. Oxidized P700 is reduced on the lumenal side of the thylakoid membrane by plastocyanin or cytochrome c6. The polypeptide is Photosystem I P700 chlorophyll a apoprotein A1 (Synechococcus sp. (strain CC9902)).